Reading from the N-terminus, the 662-residue chain is Putative cysteine-rich receptor-like protein kinase 16 (662 aa).

An N-terminal signal peptide occupies residues 1–26 (MIFIMKLKNLLPIFCFFLVSFSISSA). Gnk2-homologous domains lie at 27 to 131 (QKCG…NRSF) and 137 to 244 (MTPF…LYQF). Residues 27-277 (QKCGKTGLFK…DDGGKISTRN (251 aa)) are Extracellular-facing. Residues Asn55, Asn64, Asn106, Asn128, Asn145, Asn152, and Asn206 are each glycosylated (N-linked (GlcNAc...) asparagine). The chain crosses the membrane as a helical span at residues 278-298 (ILGITVALAFFITVLLVLGYA). Residues 299-662 (LSRRRKAYQE…DASITSVDLR (364 aa)) are Cytoplasmic-facing. In terms of domain architecture, Protein kinase spans 335–612 (FQKSNKLGHG…VFQMLTNTFL (278 aa)). Residues 341 to 349 (LGHGGFGEV) and Lys363 each bind ATP. Residue Asp460 is the Proton acceptor of the active site.

Belongs to the protein kinase superfamily. Ser/Thr protein kinase family. CRK subfamily.

Its subcellular location is the membrane. It catalyses the reaction L-seryl-[protein] + ATP = O-phospho-L-seryl-[protein] + ADP + H(+). It carries out the reaction L-threonyl-[protein] + ATP = O-phospho-L-threonyl-[protein] + ADP + H(+). This is Putative cysteine-rich receptor-like protein kinase 16 (CRK16) from Arabidopsis thaliana (Mouse-ear cress).